The primary structure comprises 271 residues: PA-phosphatase related-family protein DDB_G0284367 (271 aa).

The next 6 membrane-spanning stretches (helical) occupy residues Phe23–Phe43, Ile68–Gly88, Ala102–Val122, Phe150–Cys170, Gly181–Val201, and Phe211–Met231.

The protein belongs to the PA-phosphatase related phosphoesterase family.

The protein resides in the membrane. This chain is PA-phosphatase related-family protein DDB_G0284367, found in Dictyostelium discoideum (Social amoeba).